We begin with the raw amino-acid sequence, 499 residues long: Probable cytosol aminopeptidase (499 aa).

Residues lysine 263 and aspartate 268 each coordinate Mn(2+). Lysine 275 is an active-site residue. Mn(2+) is bound by residues aspartate 286, aspartate 345, and glutamate 347. Arginine 349 is an active-site residue.

It belongs to the peptidase M17 family. Requires Mn(2+) as cofactor.

The protein resides in the cytoplasm. The catalysed reaction is Release of an N-terminal amino acid, Xaa-|-Yaa-, in which Xaa is preferably Leu, but may be other amino acids including Pro although not Arg or Lys, and Yaa may be Pro. Amino acid amides and methyl esters are also readily hydrolyzed, but rates on arylamides are exceedingly low.. The enzyme catalyses Release of an N-terminal amino acid, preferentially leucine, but not glutamic or aspartic acids.. Functionally, presumably involved in the processing and regular turnover of intracellular proteins. Catalyzes the removal of unsubstituted N-terminal amino acids from various peptides. This chain is Probable cytosol aminopeptidase, found in Chlamydia caviae (strain ATCC VR-813 / DSM 19441 / 03DC25 / GPIC) (Chlamydophila caviae).